Consider the following 263-residue polypeptide: Indole-3-glycerol phosphate synthase (263 aa).

It belongs to the TrpC family.

The enzyme catalyses 1-(2-carboxyphenylamino)-1-deoxy-D-ribulose 5-phosphate + H(+) = (1S,2R)-1-C-(indol-3-yl)glycerol 3-phosphate + CO2 + H2O. The protein operates within amino-acid biosynthesis; L-tryptophan biosynthesis; L-tryptophan from chorismate: step 4/5. The chain is Indole-3-glycerol phosphate synthase from Aliarcobacter butzleri (strain RM4018) (Arcobacter butzleri).